A 680-amino-acid polypeptide reads, in one-letter code: Dipeptidyl carboxypeptidase (680 aa).

His469 contacts Zn(2+). The active site involves Glu470. Residues His473 and His476 each coordinate Zn(2+).

The protein belongs to the peptidase M3 family. Zn(2+) serves as cofactor.

The protein localises to the cytoplasm. It carries out the reaction Hydrolysis of unblocked, C-terminal dipeptides from oligopeptides, with broad specificity. Does not hydrolyze bonds in which P1' is Pro, or both P1 and P1' are Gly.. Removes dipeptides from the C-termini of N-blocked tripeptides, tetrapeptides and larger peptides. The sequence is that of Dipeptidyl carboxypeptidase (dcp) from Salmonella typhimurium (strain LT2 / SGSC1412 / ATCC 700720).